We begin with the raw amino-acid sequence, 35 residues long: uncharacterized protein (35 aa).

This is an uncharacterized protein from Escherichia coli (Bacteriophage T3).